A 414-amino-acid polypeptide reads, in one-letter code: Serine hydroxymethyltransferase (414 aa).

(6S)-5,6,7,8-tetrahydrofolate contacts are provided by residues leucine 117 and 121 to 123 (GHL). An N6-(pyridoxal phosphate)lysine modification is found at lysine 226.

The protein belongs to the SHMT family. As to quaternary structure, homodimer. The cofactor is pyridoxal 5'-phosphate.

The protein resides in the cytoplasm. The enzyme catalyses (6R)-5,10-methylene-5,6,7,8-tetrahydrofolate + glycine + H2O = (6S)-5,6,7,8-tetrahydrofolate + L-serine. It functions in the pathway one-carbon metabolism; tetrahydrofolate interconversion. Its pathway is amino-acid biosynthesis; glycine biosynthesis; glycine from L-serine: step 1/1. Its function is as follows. Catalyzes the reversible interconversion of serine and glycine with tetrahydrofolate (THF) serving as the one-carbon carrier. This reaction serves as the major source of one-carbon groups required for the biosynthesis of purines, thymidylate, methionine, and other important biomolecules. Also exhibits THF-independent aldolase activity toward beta-hydroxyamino acids, producing glycine and aldehydes, via a retro-aldol mechanism. The chain is Serine hydroxymethyltransferase from Dictyoglomus thermophilum (strain ATCC 35947 / DSM 3960 / H-6-12).